Here is a 412-residue protein sequence, read N- to C-terminus: MSFIQKQDKEIYEVIQNEFNRQNNNIELIASENFVSEAVMEAQGSVLTNKYAEGYPNRRYYGGCEYVDVSETLAIDRAKKLFGAEHVNVQPHSGSQANMAVYLVALEHGDTVLGMNLSHGGHLTHGAPVNFSGQFYNFVEYGVDQENEQIDYDEVLKVAKEHKPKLIVAGASAYSRTIDFKRFKEIADEVGAKLMVDMAHIAGLVAVGLHPNPVEYADFVTTTTHKTLRGPRGGMILCKEEYKKQIDKTIFPGIQSGPLEHVIAAKAVAFGEALQDDFKVYQQQVIQNAKTLANTLTDEGFRVVSGGTDNHLVAVDVKGSVGITGKVAEETLDAIGITCNKNTIPFDQEKPFVTSGIRLGTPAATTRGFDETAFEEVAKIISLVLKDPENEKALAEGKERVNTLTSKHPLYN.

(6S)-5,6,7,8-tetrahydrofolate contacts are provided by residues L117 and 121–123; that span reads GHL. K226 bears the N6-(pyridoxal phosphate)lysine mark.

This sequence belongs to the SHMT family. As to quaternary structure, homodimer. Requires pyridoxal 5'-phosphate as cofactor.

It localises to the cytoplasm. It catalyses the reaction (6R)-5,10-methylene-5,6,7,8-tetrahydrofolate + glycine + H2O = (6S)-5,6,7,8-tetrahydrofolate + L-serine. It participates in one-carbon metabolism; tetrahydrofolate interconversion. It functions in the pathway amino-acid biosynthesis; glycine biosynthesis; glycine from L-serine: step 1/1. Catalyzes the reversible interconversion of serine and glycine with tetrahydrofolate (THF) serving as the one-carbon carrier. This reaction serves as the major source of one-carbon groups required for the biosynthesis of purines, thymidylate, methionine, and other important biomolecules. Also exhibits THF-independent aldolase activity toward beta-hydroxyamino acids, producing glycine and aldehydes, via a retro-aldol mechanism. The sequence is that of Serine hydroxymethyltransferase from Staphylococcus saprophyticus subsp. saprophyticus (strain ATCC 15305 / DSM 20229 / NCIMB 8711 / NCTC 7292 / S-41).